A 488-amino-acid chain; its full sequence is UDP-N-acetylmuramate--L-alanine ligase (488 aa).

Position 129 to 135 (129 to 135 (GSHGKTT)) interacts with ATP.

This sequence belongs to the MurCDEF family.

It is found in the cytoplasm. The enzyme catalyses UDP-N-acetyl-alpha-D-muramate + L-alanine + ATP = UDP-N-acetyl-alpha-D-muramoyl-L-alanine + ADP + phosphate + H(+). It functions in the pathway cell wall biogenesis; peptidoglycan biosynthesis. In terms of biological role, cell wall formation. The sequence is that of UDP-N-acetylmuramate--L-alanine ligase from Prochlorococcus marinus (strain MIT 9313).